The following is a 227-amino-acid chain: Cytidylate kinase (227 aa).

ATP is bound at residue 12-20 (GPSGAGKGT).

Belongs to the cytidylate kinase family. Type 1 subfamily.

Its subcellular location is the cytoplasm. The catalysed reaction is CMP + ATP = CDP + ADP. It carries out the reaction dCMP + ATP = dCDP + ADP. This is Cytidylate kinase from Citrobacter koseri (strain ATCC BAA-895 / CDC 4225-83 / SGSC4696).